Here is a 262-residue protein sequence, read N- to C-terminus: Tryptophan synthase alpha chain (262 aa).

Catalysis depends on proton acceptor residues Glu49 and Asp60.

This sequence belongs to the TrpA family. In terms of assembly, tetramer of two alpha and two beta chains.

The catalysed reaction is (1S,2R)-1-C-(indol-3-yl)glycerol 3-phosphate + L-serine = D-glyceraldehyde 3-phosphate + L-tryptophan + H2O. The protein operates within amino-acid biosynthesis; L-tryptophan biosynthesis; L-tryptophan from chorismate: step 5/5. In terms of biological role, the alpha subunit is responsible for the aldol cleavage of indoleglycerol phosphate to indole and glyceraldehyde 3-phosphate. This Caldanaerobacter subterraneus subsp. tengcongensis (strain DSM 15242 / JCM 11007 / NBRC 100824 / MB4) (Thermoanaerobacter tengcongensis) protein is Tryptophan synthase alpha chain.